A 256-amino-acid polypeptide reads, in one-letter code: Sugar fermentation stimulation protein homolog (256 aa).

It belongs to the SfsA family.

This chain is Sugar fermentation stimulation protein homolog, found in Prochlorococcus marinus (strain MIT 9211).